Reading from the N-terminus, the 37-residue chain is Dolichyl-diphosphooligosaccharide--protein glycosyltransferase subunit 4 (37 aa).

The Lumenal segment spans residues 1–4 (MITD). The helical transmembrane segment at 5–25 (VQLAIFANMLGVSLFLLVVLY) threads the bilayer. Topologically, residues 26-37 (HYVAVNNPKKQE) are cytoplasmic.

This sequence belongs to the OST4 family. As to quaternary structure, component of the oligosaccharyltransferase (OST) complex. OST exists in two different complex forms which contain common core subunits RPN1, RPN2, OST48, OST4, DAD1 and TMEM258, either STT3A or STT3B as catalytic subunits, and form-specific accessory subunits. STT3A complex assembly occurs through the formation of 3 subcomplexes. Subcomplex 1 contains RPN1 and TMEM258, subcomplex 2 contains the STT3A-specific subunits STT3A, DC2/OSTC, and KCP2 as well as the core subunit OST4, and subcomplex 3 contains RPN2, DAD1, and OST48. The STT3A complex can form stable complexes with the Sec61 complex or with both the Sec61 and TRAP complexes.

It is found in the endoplasmic reticulum. The protein localises to the endoplasmic reticulum membrane. It participates in protein modification; protein glycosylation. In terms of biological role, subunit of the oligosaccharyl transferase (OST) complex that catalyzes the initial transfer of a defined glycan (Glc(3)Man(9)GlcNAc(2) in eukaryotes) from the lipid carrier dolichol-pyrophosphate to an asparagine residue within an Asn-X-Ser/Thr consensus motif in nascent polypeptide chains, the first step in protein N-glycosylation. N-glycosylation occurs cotranslationally and the complex associates with the Sec61 complex at the channel-forming translocon complex that mediates protein translocation across the endoplasmic reticulum (ER). All subunits are required for a maximal enzyme activity. Specifically involved in maintaining stability of STT3A-containing OST complexes. This chain is Dolichyl-diphosphooligosaccharide--protein glycosyltransferase subunit 4, found in Homo sapiens (Human).